A 651-amino-acid polypeptide reads, in one-letter code: Probable Xaa-Pro aminopeptidase P (651 aa).

4 residues coordinate Mn(2+): Asp-448, Asp-459, Glu-557, and Glu-571.

Belongs to the peptidase M24B family. Mn(2+) serves as cofactor.

The catalysed reaction is Release of any N-terminal amino acid, including proline, that is linked to proline, even from a dipeptide or tripeptide.. Its function is as follows. Catalyzes the removal of a penultimate prolyl residue from the N-termini of peptides. In Coccidioides posadasii (strain C735) (Valley fever fungus), this protein is Probable Xaa-Pro aminopeptidase P (AMPP).